We begin with the raw amino-acid sequence, 427 residues long: Trigger factor (427 aa).

In terms of domain architecture, PPIase FKBP-type spans 163–248; that stretch reads GDTVILDFEG…LHEIKTKEVP (86 aa).

This sequence belongs to the FKBP-type PPIase family. Tig subfamily.

It localises to the cytoplasm. The enzyme catalyses [protein]-peptidylproline (omega=180) = [protein]-peptidylproline (omega=0). Functionally, involved in protein export. Acts as a chaperone by maintaining the newly synthesized protein in an open conformation. Functions as a peptidyl-prolyl cis-trans isomerase. This Listeria welshimeri serovar 6b (strain ATCC 35897 / DSM 20650 / CCUG 15529 / CIP 8149 / NCTC 11857 / SLCC 5334 / V8) protein is Trigger factor.